A 409-amino-acid chain; its full sequence is uncharacterized protein (409 aa).

Residues 1-29 (MARSRCVHRVVHQAACIGVIGLSTSALTT) form the signal peptide. Cysteine 30 carries the N-palmitoyl cysteine lipid modification. The S-diacylglycerol cysteine moiety is linked to residue cysteine 30.

Belongs to the TP013X lipoprotein family.

The protein localises to the cell membrane. This is an uncharacterized protein from Treponema pallidum (strain Nichols).